Reading from the N-terminus, the 460-residue chain is MNWLETALSTSSLKEAPAVAVLHLGCEKNRVDTEHMLGLLAQAGYRVEGDEDSADYVIVNTCSFIEAARRESVSTLMELAVQGKKIIIAGCLAQHFQEELLREIPEAVAIVGTGDYHQIVQVIQRAERGERVNAVTSSLDYIADETVPRYRTTHAPVAYLRVAEGCDYRCSFCIIPHLRGKQRSRPIESILREAEQLAAEGVQELILISQITTNYGLDLYGEPRLAELIRALGQIPIPWIRMLYAYPTGITPAVVEAIQETPNFLLYLDLPLQHSHPAILKAMNRPWQGQVNDRLIERLRQALPKAVLRTSFIVGFPGETEEHFQHLLEFVQRHQFDHVGVFTFSPEEGTPAYHLPQQVPEPLKEERRARLMQLQQGIAFRRNREQVGQVVPVLLEQENPRTGEWIGRSPRFAPEVDGVVYVRGPGSLGSLVPVQITRAEPYDLFGQVVEAPAGFSWSGR.

The MTTase N-terminal domain occupies 17–128 (PAVAVLHLGC…IVQVIQRAER (112 aa)). Residues cysteine 26, cysteine 62, cysteine 91, cysteine 166, cysteine 170, and cysteine 173 each coordinate [4Fe-4S] cluster. Positions 152–381 (TTHAPVAYLR…MQLQQGIAFR (230 aa)) constitute a Radical SAM core domain. In terms of domain architecture, TRAM spans 384–450 (REQVGQVVPV…PYDLFGQVVE (67 aa)).

The protein belongs to the methylthiotransferase family. RimO subfamily. Requires [4Fe-4S] cluster as cofactor.

The protein localises to the cytoplasm. It carries out the reaction L-aspartate(89)-[ribosomal protein uS12]-hydrogen + (sulfur carrier)-SH + AH2 + 2 S-adenosyl-L-methionine = 3-methylsulfanyl-L-aspartate(89)-[ribosomal protein uS12]-hydrogen + (sulfur carrier)-H + 5'-deoxyadenosine + L-methionine + A + S-adenosyl-L-homocysteine + 2 H(+). Its function is as follows. Catalyzes the methylthiolation of an aspartic acid residue of ribosomal protein uS12. This is Ribosomal protein uS12 methylthiotransferase RimO from Synechococcus sp. (strain JA-3-3Ab) (Cyanobacteria bacterium Yellowstone A-Prime).